A 267-amino-acid chain; its full sequence is Membrane-spanning 4-domains subfamily A member 10 (267 aa).

The Cytoplasmic portion of the chain corresponds to 1-61; it reads MKAEATVIPS…KKSSLLKELG (61 aa). Residues 62–82 traverse the membrane as a helical segment; it reads AFHITIALLHLVFGGYLASIV. Topologically, residues 83–91 are extracellular; that stretch reads KNLHLVVLK. A helical transmembrane segment spans residues 92–112; the sequence is SWYPFWGAASFLISGILAITM. The Cytoplasmic portion of the chain corresponds to 113-121; it reads KTFSKTYLK. The chain crosses the membrane as a helical span at residues 122–142; sequence MLCLMTNLISLFCVLSGLFVI. Residues 143–171 are Extracellular-facing; it reads SKDLFLESPFESPIWRMYPNSTVHIQRLE. Residues 172 to 192 form a helical membrane-spanning segment; that stretch reads LALLCFTVLELFLPVPTAVTA. At 193–267 the chain is on the cytoplasmic side; that stretch reads WRGDCPSAKN…GAAIWTQTAN (75 aa).

Belongs to the MS4A family.

The protein localises to the membrane. Functionally, may be involved in signal transduction as a component of a multimeric receptor complex. The polypeptide is Membrane-spanning 4-domains subfamily A member 10 (MS4A10) (Homo sapiens (Human)).